An 83-amino-acid chain; its full sequence is MAENALADVKTLSFERAIEELESIVKRLEDGKVPLEESVAIYERGEALKRRCEELLRQAEARVEKITTDASGQVTGTEPLDVQ.

It belongs to the XseB family. As to quaternary structure, heterooligomer composed of large and small subunits.

It localises to the cytoplasm. The enzyme catalyses Exonucleolytic cleavage in either 5'- to 3'- or 3'- to 5'-direction to yield nucleoside 5'-phosphates.. Its function is as follows. Bidirectionally degrades single-stranded DNA into large acid-insoluble oligonucleotides, which are then degraded further into small acid-soluble oligonucleotides. This Nitrobacter hamburgensis (strain DSM 10229 / NCIMB 13809 / X14) protein is Exodeoxyribonuclease 7 small subunit.